A 544-amino-acid chain; its full sequence is Chaperonin GroEL 3 (544 aa).

ATP is bound by residues 30–33 (TLGP), Lys-51, 87–91 (DGTTT), Gly-415, and Asp-495.

The protein belongs to the chaperonin (HSP60) family. In terms of assembly, forms a cylinder of 14 subunits composed of two heptameric rings stacked back-to-back. Interacts with the co-chaperonin GroES.

The protein localises to the cytoplasm. It catalyses the reaction ATP + H2O + a folded polypeptide = ADP + phosphate + an unfolded polypeptide.. Functionally, together with its co-chaperonin GroES, plays an essential role in assisting protein folding. The GroEL-GroES system forms a nano-cage that allows encapsulation of the non-native substrate proteins and provides a physical environment optimized to promote and accelerate protein folding. The chain is Chaperonin GroEL 3 from Psychromonas ingrahamii (strain DSM 17664 / CCUG 51855 / 37).